The chain runs to 144 residues: 3-dehydroquinate dehydratase (144 aa).

The active-site Proton acceptor is the tyrosine 24. 3 residues coordinate substrate: asparagine 73, histidine 79, and aspartate 86. Residue histidine 99 is the Proton donor of the active site. Substrate contacts are provided by residues 100-101 and arginine 110; that span reads LS.

The protein belongs to the type-II 3-dehydroquinase family. As to quaternary structure, homododecamer.

It catalyses the reaction 3-dehydroquinate = 3-dehydroshikimate + H2O. It participates in metabolic intermediate biosynthesis; chorismate biosynthesis; chorismate from D-erythrose 4-phosphate and phosphoenolpyruvate: step 3/7. Functionally, catalyzes a trans-dehydration via an enolate intermediate. This is 3-dehydroquinate dehydratase from Shewanella sp. (strain ANA-3).